The chain runs to 295 residues: Probable alpha-L-glutamate ligase (295 aa).

The ATP-grasp domain occupies 104 to 287; the sequence is HQLLAAQGID…VAAAIVVHLE (184 aa). Residues K141, 178-179, D187, and 211-213 each bind ATP; these read EF and RSN. Residues D248, E260, and N262 each contribute to the Mg(2+) site. Mn(2+) is bound by residues D248, E260, and N262.

It belongs to the RimK family. The cofactor is Mg(2+). Mn(2+) serves as cofactor.

This chain is Probable alpha-L-glutamate ligase, found in Xanthomonas axonopodis pv. citri (strain 306).